The primary structure comprises 202 residues: Large ribosomal subunit protein bL25 (202 aa).

The tract at residues 182–202 (QTAPEEEEGTAAETTEPELAE) is disordered. Residues 185 to 202 (PEEEEGTAAETTEPELAE) show a composition bias toward acidic residues.

The protein belongs to the bacterial ribosomal protein bL25 family. CTC subfamily. As to quaternary structure, part of the 50S ribosomal subunit; part of the 5S rRNA/L5/L18/L25 subcomplex. Contacts the 5S rRNA. Binds to the 5S rRNA independently of L5 and L18.

Its function is as follows. This is one of the proteins that binds to the 5S RNA in the ribosome where it forms part of the central protuberance. This chain is Large ribosomal subunit protein bL25, found in Enterococcus faecalis (strain ATCC 700802 / V583).